Reading from the N-terminus, the 498-residue chain is ATP synthase subunit beta, chloroplastic (498 aa).

Residue 172–179 (GGAGVGKT) participates in ATP binding.

This sequence belongs to the ATPase alpha/beta chains family. F-type ATPases have 2 components, CF(1) - the catalytic core - and CF(0) - the membrane proton channel. CF(1) has five subunits: alpha(3), beta(3), gamma(1), delta(1), epsilon(1). CF(0) has four main subunits: a(1), b(1), b'(1) and c(9-12).

It is found in the plastid. Its subcellular location is the chloroplast thylakoid membrane. It carries out the reaction ATP + H2O + 4 H(+)(in) = ADP + phosphate + 5 H(+)(out). Functionally, produces ATP from ADP in the presence of a proton gradient across the membrane. The catalytic sites are hosted primarily by the beta subunits. This chain is ATP synthase subunit beta, chloroplastic, found in Morus indica (Mulberry).